The primary structure comprises 646 residues: 1-deoxy-D-xylulose-5-phosphate synthase (646 aa).

Thiamine diphosphate contacts are provided by residues His-86 and 127 to 129 (AHS). Asp-158 contacts Mg(2+). Thiamine diphosphate is bound by residues 159–160 (GA), Asn-188, Tyr-295, and Glu-377. Asn-188 contacts Mg(2+).

Belongs to the transketolase family. DXPS subfamily. Homodimer. Mg(2+) serves as cofactor. Requires thiamine diphosphate as cofactor.

It carries out the reaction D-glyceraldehyde 3-phosphate + pyruvate + H(+) = 1-deoxy-D-xylulose 5-phosphate + CO2. It participates in metabolic intermediate biosynthesis; 1-deoxy-D-xylulose 5-phosphate biosynthesis; 1-deoxy-D-xylulose 5-phosphate from D-glyceraldehyde 3-phosphate and pyruvate: step 1/1. Its function is as follows. Catalyzes the acyloin condensation reaction between C atoms 2 and 3 of pyruvate and glyceraldehyde 3-phosphate to yield 1-deoxy-D-xylulose-5-phosphate (DXP). This chain is 1-deoxy-D-xylulose-5-phosphate synthase, found in Burkholderia ambifaria (strain ATCC BAA-244 / DSM 16087 / CCUG 44356 / LMG 19182 / AMMD) (Burkholderia cepacia (strain AMMD)).